The sequence spans 352 residues: B1 bradykinin receptor (352 aa).

Over 1-41 (MASWPPLELQSSNQSQLFPQNATACDNAPEAWDLLHRVLPT) the chain is Extracellular. N-linked (GlcNAc...) asparagine glycans are attached at residues N13 and N21. A helical membrane pass occupies residues 42–62 (FIISICSFGLLGNLFVLLVFL). The Cytoplasmic portion of the chain corresponds to 63-72 (LPRRRLNVAE). The chain crosses the membrane as a helical span at residues 73–93 (IYLANLAASDLVFVLGLPFWA). Topologically, residues 94–110 (ENIWNQFNWPFGALLCR) are extracellular. Residues C109 and C188 are joined by a disulfide bond. The helical transmembrane segment at 111–131 (GINGVIKANLFISIFLVVAIS) threads the bilayer. Over 132 to 153 (QDRYCLLVHPMASRRRQRRRQA) the chain is Cytoplasmic. The chain crosses the membrane as a helical span at residues 154–174 (RVTCVLIWVVGGLLSIPTFLL). The Extracellular segment spans residues 175 to 206 (RSIQAVPDLNITACILLLPHEAWHFARIVELN). N184 is a glycosylation site (N-linked (GlcNAc...) asparagine). A helical transmembrane segment spans residues 207 to 227 (ILAFLLPLAAIVFFNYHILAS). Over 228–250 (LRGREEVSRTRCGGRKDSKTTAL) the chain is Cytoplasmic. The chain crosses the membrane as a helical span at residues 251–271 (ILTLVVAFLVCWAPYHFFAFL). Topologically, residues 272–294 (EFLFQVQAIRGCFWEDFIDLGLQ) are extracellular. A helical transmembrane segment spans residues 295–315 (LANFLAFTNSSLNPVIYVFVG). Residues 316–352 (RLFRTKVWELYKQCTPKSLAPISSSHRKEIFQLFWRN) are Cytoplasmic-facing. C329 is lipidated: S-palmitoyl cysteine.

The protein belongs to the G-protein coupled receptor 1 family. Bradykinin receptor subfamily. BDKRB1 sub-subfamily.

The protein localises to the cell membrane. In terms of biological role, this is a receptor for bradykinin. Could be a factor in chronic pain and inflammation. The sequence is that of B1 bradykinin receptor (BDKRB1) from Chlorocebus aethiops (Green monkey).